The following is a 204-amino-acid chain: Ribosomal RNA small subunit methyltransferase J (204 aa).

S-adenosyl-L-methionine-binding positions include 55 to 56 (RD), 71 to 72 (ER), and Asp123.

Belongs to the methyltransferase superfamily. RsmJ family.

The protein localises to the cytoplasm. It carries out the reaction guanosine(1516) in 16S rRNA + S-adenosyl-L-methionine = N(2)-methylguanosine(1516) in 16S rRNA + S-adenosyl-L-homocysteine + H(+). Its function is as follows. Specifically methylates the guanosine in position 1516 of 16S rRNA. This chain is Ribosomal RNA small subunit methyltransferase J, found in Rhodopseudomonas palustris (strain ATCC BAA-98 / CGA009).